The primary structure comprises 313 residues: Pre-mRNA-splicing factor 38A (313 aa).

The tract at residues 1–179 is N-terminal protein interaction domain; sequence MANRTVKDAN…VLEEAELLDP (179 aa). Positions 172–201 form a coiled coil; sequence EEAELLDPRISALEEDLDEVETSEEEDDED. Residues 182 to 313 form a disordered region; that stretch reads SALEEDLDEV…SHKRSRRGNE (132 aa). Residues 184 to 202 show a composition bias toward acidic residues; it reads LEEDLDEVETSEEEDDEDE. Over residues 203–224 the composition is skewed to basic and acidic residues; it reads KPERMQSPEPHRRSYRDMDRPR. 3 stretches are compositionally biased toward basic residues: residues 225–250, 260–294, and 302–313; these read RSPSPRYRRSRSPRRRSRSPKRRSPS, HRSKSPRRHRSRSRERRHRSKSPGHHRSHRHRSHS, and KKSHKRSRRGNE.

This sequence belongs to the PRP38 family. Component of the spliceosome B complex.

The protein resides in the nucleus. Functionally, involved in pre-mRNA splicing as a component of the spliceosome. The chain is Pre-mRNA-splicing factor 38A (prpf38a) from Danio rerio (Zebrafish).